Reading from the N-terminus, the 344-residue chain is Large ribosomal subunit protein uL3 (344 aa).

This sequence belongs to the universal ribosomal protein uL3 family. As to quaternary structure, part of the 50S ribosomal subunit. Forms a cluster with proteins L14 and L24e.

In terms of biological role, one of the primary rRNA binding proteins, it binds directly near the 3'-end of the 23S rRNA, where it nucleates assembly of the 50S subunit. The sequence is that of Large ribosomal subunit protein uL3 from Aeropyrum pernix (strain ATCC 700893 / DSM 11879 / JCM 9820 / NBRC 100138 / K1).